Here is a 536-residue protein sequence, read N- to C-terminus: G-protein coupled receptor Mth2 (536 aa).

The Extracellular portion of the chain corresponds to 1 to 210 (MAERDHYHTI…DDNSTVKIIN (210 aa)). 5 disulfide bridges follow: C17/C71, C73/C78, C82/C177, C83/C96, and C138/C197. 2 N-linked (GlcNAc...) asparagine glycosylation sites follow: N24 and N33. N-linked (GlcNAc...) asparagine glycosylation is found at N103, N113, N118, N159, N184, and N203. A helical membrane pass occupies residues 211–231 (AYAMMFSIPFMMLTIAVYLLI). Residues 232-241 (PELRNQHGKS) are Cytoplasmic-facing. A helical membrane pass occupies residues 242 to 262 (LVCYLVGLTVGYTSLCYVQLY). Topologically, residues 263-273 (QVDATGDACKV) are extracellular. The chain crosses the membrane as a helical span at residues 274–294 (FGYTAYFFFMGAYMWLSVISF). At 295 to 314 (DLWHNFRGTRGINRFQEKKR) the chain is on the cytoplasmic side. The chain crosses the membrane as a helical span at residues 315–335 (FLFYSLYSWGIAVVFLAFTYI). At 336–365 (AQELTNLPAYLKPGIGDGVYCWLDMSNWAA) the chain is on the extracellular side. A helical transmembrane segment spans residues 366–386 (MIYFYGPILVIVVANTIMFIM). The Cytoplasmic segment spans residues 387-417 (TAIKIHGVQREMARIIASENSTKNLRTEKDK). The helical transmembrane segment at 418–438 (FGLFLRLFLIMGITWLTELIS) threads the bilayer. At 439-449 (YFVGSDKGWSK) the chain is on the extracellular side. Residues 450-470 (LFYISDLANAMQGFLIFMLFV) traverse the membrane as a helical segment. Residues 471-536 (MKKKVKHLIT…VDPQKTTIFR (66 aa)) lie on the Cytoplasmic side of the membrane. Residues 487–506 (RDGSNQRQSQYSTKTTSSSV) form a disordered region. The span at 492-505 (QRQSQYSTKTTSSS) shows a compositional bias: low complexity.

This sequence belongs to the G-protein coupled receptor 2 family. Mth subfamily. Homodimer.

It is found in the cell membrane. In terms of biological role, involved in biological aging and stress response. Essential for adult survival. The polypeptide is G-protein coupled receptor Mth2 (mth2) (Drosophila yakuba (Fruit fly)).